Consider the following 265-residue polypeptide: Shikimate dehydrogenase (NADP(+)) (265 aa).

Shikimate-binding positions include 14–16 (SLS) and Thr-61. Catalysis depends on Lys-65, which acts as the Proton acceptor. Positions 85 and 100 each coordinate shikimate. Residues 123-127 (GAGGA), 146-151 (NRTESK), and Ala-209 contribute to the NADP(+) site. Tyr-211 serves as a coordination point for shikimate. Gly-232 lines the NADP(+) pocket.

This sequence belongs to the shikimate dehydrogenase family. As to quaternary structure, homodimer.

The catalysed reaction is shikimate + NADP(+) = 3-dehydroshikimate + NADPH + H(+). It functions in the pathway metabolic intermediate biosynthesis; chorismate biosynthesis; chorismate from D-erythrose 4-phosphate and phosphoenolpyruvate: step 4/7. Its function is as follows. Involved in the biosynthesis of the chorismate, which leads to the biosynthesis of aromatic amino acids. Catalyzes the reversible NADPH linked reduction of 3-dehydroshikimate (DHSA) to yield shikimate (SA). The polypeptide is Shikimate dehydrogenase (NADP(+)) (Haloarcula marismortui (strain ATCC 43049 / DSM 3752 / JCM 8966 / VKM B-1809) (Halobacterium marismortui)).